Here is a 548-residue protein sequence, read N- to C-terminus: Frizzled-7 (548 aa).

Positions 1–19 are cleaved as a signal peptide; the sequence is MFATVSLLFCLLLQPSPSA. Topologically, residues 20–230 are extracellular; the sequence is QQYHGEKGIS…EEEVRFARLW (211 aa). One can recognise an FZ domain in the interval 31-150; it reads PDHGFCQPIS…HGAGEICVGQ (120 aa). 5 disulfides stabilise this stretch: Cys-36–Cys-97, Cys-44–Cys-90, Cys-81–Cys-118, Cys-107–Cys-147, and Cys-111–Cys-135. The N-linked (GlcNAc...) asparagine glycan is linked to Asn-50. Asn-151 carries an N-linked (GlcNAc...) asparagine glycan. Residues 231–251 form a helical membrane-spanning segment; that stretch reads VGIWAILCGISTLFTVLTYLV. Residues 252 to 262 lie on the Cytoplasmic side of the membrane; the sequence is DMRRFSYPERP. The chain crosses the membrane as a helical span at residues 263–283; it reads IIFLSGCYFMVAVAYTAGFLL. Topologically, residues 284–310 are extracellular; that stretch reads EERGVCVERFSEDSYRTVAQGTKKEGC. A helical transmembrane segment spans residues 311-331; sequence TILFMILYFFGMASSIWWVIL. At 332-353 the chain is on the cytoplasmic side; that stretch reads SLTWFLAAGMKWGHEAIEANSQ. A helical membrane pass occupies residues 354–374; it reads YFHLAAWAVPAVKTITILAMG. Over 375–397 the chain is Extracellular; that stretch reads QVDGDILSGVCYVGINSVDSLRG. The helical transmembrane segment at 398–418 threads the bilayer; it reads FVLAPLFVYLFIGTSFLLAGF. Residues 419–444 lie on the Cytoplasmic side of the membrane; that stretch reads VSLFRIRTIMKHDGTKTEKLEKLMVR. A helical transmembrane segment spans residues 445 to 465; sequence IGVFSVMYTVPATIVLACYFY. Residues 466 to 502 are Extracellular-facing; sequence EQAFRDTWEKTWLVQTCKGFAVPCPNYNFAPMSPDFT. Residues 503-523 form a helical membrane-spanning segment; it reads VFMIKYLMTMIVGITSSFWIW. The Cytoplasmic segment spans residues 524–548; the sequence is SGKTLQSWRRFYHRLSNGGKGETAV. The short motif at 526 to 531 is the Lys-Thr-X-X-X-Trp motif, mediates interaction with the PDZ domain of Dvl family members element; sequence KTLQSW. Residues 546-548 carry the PDZ-binding motif; the sequence is TAV.

It belongs to the G-protein coupled receptor Fz/Smo family. Interacts with wnt11 and sdc4. The extracellular domain interacts with the extracellular domain of pcdh8/papc.

The protein resides in the cell membrane. It is found in the endosome membrane. Receptor for Wnt proteins. Acts in both canonical and non-canonical Wnt pathways. Although different papers report differing Wnt preferences, wnt5a, wnt8b and wnt11 have been proposed as synergists. In the canonical Wnt pathway, acts via beta-catenin to promote the expression of the dorsal genes siamois, twin and nodal3 and to establish the dorsal axis of the embryo and induce dorsal mesoderm formation. In a non-canonical Wnt/planar cell polarity (PCP) pathway, acts with sdc4 and dvl2/dsh to regulate convergent extension movements in gastrulation. Triggers phosphorylation of dvl2/dsh and its translocation to the plasma membrane. In a third branch of Wnt signaling, acts in a non-canonical pathway via trimeric G proteins, and independently of dvl2/dsh, to recruit protein kinase C (PKC) to the membrane and thus activate PKC. PKC signaling controls cell sorting and tissue separation during gastrulation. This chain is Frizzled-7, found in Xenopus tropicalis (Western clawed frog).